The following is a 94-amino-acid chain: Co-chaperonin GroES (94 aa).

Belongs to the GroES chaperonin family. In terms of assembly, heptamer of 7 subunits arranged in a ring. Interacts with the chaperonin GroEL.

The protein resides in the cytoplasm. Together with the chaperonin GroEL, plays an essential role in assisting protein folding. The GroEL-GroES system forms a nano-cage that allows encapsulation of the non-native substrate proteins and provides a physical environment optimized to promote and accelerate protein folding. GroES binds to the apical surface of the GroEL ring, thereby capping the opening of the GroEL channel. The protein is Co-chaperonin GroES of Streptococcus agalactiae.